The primary structure comprises 139 residues: Large ribosomal subunit protein uL16 (139 aa).

The span at 1–16 (MLIPKRTKYRKQHRPD) shows a compositional bias: basic residues. Positions 1–23 (MLIPKRTKYRKQHRPDRHGMSKG) are disordered.

The protein belongs to the universal ribosomal protein uL16 family. Part of the 50S ribosomal subunit.

Binds 23S rRNA and is also seen to make contacts with the A and possibly P site tRNAs. This Bifidobacterium animalis subsp. lactis (strain AD011) protein is Large ribosomal subunit protein uL16.